A 1084-amino-acid chain; its full sequence is Cellulose synthase A catalytic subunit 2 [UDP-forming] (1084 aa).

At methionine 1 the chain carries N-acetylmethionine. At 1–278 (MNTGGRLIAG…RSSRINPYRM (278 aa)) the chain is on the cytoplasmic side. Residues cysteine 39, cysteine 42, cysteine 58, cysteine 61, cysteine 66, cysteine 69, cysteine 81, and cysteine 84 each contribute to the Zn(2+) site. An RING-type; degenerate zinc finger spans residues 39 to 85 (CQICGDEIELTVSSELFVACNECAFPVCRPCYEYERREGNQACPQCK). Residues 230–259 (IKHEGGNNGRGSNDDDELDDPDMPMMDEGR) form a disordered region. A helical transmembrane segment spans residues 279–299 (LILCRLAILGLFFHYRILHPV). Topologically, residues 300–301 (ND) are extracellular. A helical transmembrane segment spans residues 302–322 (AYGLWLTSVICEIWFAVSWIL). Over 323-867 (DQFPKWYPIE…INSVVYPWTS (545 aa)) the chain is Cytoplasmic. UDP-alpha-D-glucose contacts are provided by serine 361, lysine 367, glutamate 368, and aspartate 397. Aspartate 397 is an active-site residue. The stretch at 451-477 (VRERRAMKRDYEEFKVKINALVATAQK) forms a coiled coil. Lysine 538 contacts UDP-alpha-D-glucose. The Mn(2+) site is built by lysine 539 and aspartate 563. The active site involves aspartate 784. Residues 868-888 (LPLIVYCSLPAVCLLTGKFIV) traverse the membrane as a helical segment. The Extracellular segment spans residues 889–893 (PEISN). The helical transmembrane segment at 894 to 914 (YAGILFMLMFISIAVTGILEM) threads the bilayer. Residues 915–929 (QWGGVGIDDWWRNEQ) are Cytoplasmic-facing. Residues 930–950 (FWVIGGASSHLFALFQGLLKV) form a helical membrane-spanning segment. Over 951 to 979 (LAGVNTNFTVTSKAADDGAFSELYIFKWT) the chain is Extracellular. Asparagine 957 carries an N-linked (GlcNAc...) asparagine glycan. A helical transmembrane segment spans residues 980-1000 (TLLIPPTTLLIINIIGVIVGV). At 1001–1011 (SDAISNGYDSW) the chain is on the cytoplasmic side. The chain crosses the membrane as a helical span at residues 1012–1032 (GPLFGRLFFALWVIVHLYPFL). The Extracellular portion of the chain corresponds to 1033 to 1041 (KGMLGKQDK). A helical transmembrane segment spans residues 1042–1062 (MPTIIVVWSILLASILTLLWV). At 1063-1084 (RVNPFVAKGGPVLEICGLNCGN) the chain is on the cytoplasmic side.

The protein belongs to the glycosyltransferase 2 family. Plant cellulose synthase subfamily. In terms of assembly, homodimer. Interaction through zinc finger domain. The cofactor is Mn(2+). Zn(2+) serves as cofactor. In terms of tissue distribution, strongly and ubiquitously expressed. Localized in some dividing and expanding cells, as well as in vascular tissues.

It is found in the cell membrane. It carries out the reaction [(1-&gt;4)-beta-D-glucosyl](n) + UDP-alpha-D-glucose = [(1-&gt;4)-beta-D-glucosyl](n+1) + UDP + H(+). Its pathway is glycan metabolism; plant cellulose biosynthesis. Catalytic subunit of cellulose synthase terminal complexes ('rosettes'), required for beta-1,4-glucan microfibril crystallization, a major mechanism of the cell wall formation. Involved in the primary cell wall formation. This chain is Cellulose synthase A catalytic subunit 2 [UDP-forming], found in Arabidopsis thaliana (Mouse-ear cress).